Consider the following 395-residue polypeptide: ATP-dependent RNA helicase eIF4A (395 aa).

The short motif at 22–50 (TSFDDLGLKDELLRGIYGYGFENPSSIQQ) is the Q motif element. The Helicase ATP-binding domain occupies 53–223 (ILPVIKGNDV…GKFMRDPVRI (171 aa)). 66-73 (AQSGTGKT) lines the ATP pocket. Residues 171–174 (DEAD) carry the DEAD box motif. A Helicase C-terminal domain is found at 234 to 395 (GIKQFYIDVE…EMPTNIADLI (162 aa)).

It belongs to the DEAD box helicase family. eIF4A subfamily. In terms of assembly, component of the eIF4F complex, which composition varies with external and internal environmental conditions. It is composed of at least eIF4A, eIF4E and eIF4G.

The protein resides in the cytoplasm. The enzyme catalyses ATP + H2O = ADP + phosphate + H(+). Its function is as follows. ATP-dependent RNA helicase which is a subunit of the eIF4F complex involved in cap recognition and is required for mRNA binding to ribosome. In the current model of translation initiation, eIF4A unwinds RNA secondary structures in the 5'-UTR of mRNAs which is necessary to allow efficient binding of the small ribosomal subunit, and subsequent scanning for the initiator codon. The sequence is that of ATP-dependent RNA helicase eIF4A (TIF1) from Yarrowia lipolytica (strain CLIB 122 / E 150) (Yeast).